The sequence spans 312 residues: Atrochrysone carboxyl ACP thioesterase AacuM (312 aa).

Zn(2+) contacts are provided by His103, His105, Asp107, and His108. Catalysis depends on Asp107, which acts as the Proton donor/acceptor.

It belongs to the metallo-beta-lactamase superfamily. It depends on Zn(2+) as a cofactor.

The enzyme catalyses atrochrysone carboxyl-[ACP] + H2O = atrochrysone carboxylate + holo-[ACP] + H(+). It functions in the pathway secondary metabolite biosynthesis. In terms of biological role, atrochrysone carboxyl ACP thioesterase; part of the gene cluster that mediates the biosynthesis of the tetrahydroxanthone dimer secalonic acid D. The pathway begins with the synthesis of atrochrysone thioester by the polyketide synthase AacuL. The atrochrysone carboxyl ACP thioesterase AacuM then breaks the thioester bond and releases the atrochrysone carboxylic acid from AacuL. Atrochrysone carboxylic acid is decarboxylated by the decarboxylase AacuI, and oxidized by the anthrone oxygenase AacuG to yield emodin. Emodin is then reduced to emodin hydroquinone by a yet unidentified oxidoreductase. A-ring reduction by the short chain dehydrogenase AacuN, dehydration by the scytalone dehydratase-like protein AacuK and probable spontaneous re-oxidation, results in overall deoxygenation to chrysophanol. Baeyer-Villiger oxidation by the Baeyer-Villiger monooxygenase (BVMO) AacuH then yields monodictyphenone. Monodictyphenone is transformed into compounds with the tetrahydroxanthone skeleton via methylesterification by the methyltransferase AacuQ, followed by the action of the flavin-dependent monooxygenase AacuC, the isomerase AacuP, and the short chain dehydrogenase/reductase AacuF or AacuD. AacuF and AacuD should accept the same compound as a substrate but perform the ketoreduction with a different stereoselectivity, thus yielding blennolides B and A, respectively. In the final step of the biosynthesis, the cytochrome P450 monooxygenase AacuE accepts blennolide B and/or blennolide A to conduct the dimerization reaction to furnish the tetrahydroxanthone dimers, secalonic acids D, B, and F. This Aspergillus aculeatus (strain ATCC 16872 / CBS 172.66 / WB 5094) protein is Atrochrysone carboxyl ACP thioesterase AacuM.